A 186-amino-acid polypeptide reads, in one-letter code: Threonylcarbamoyl-AMP synthase (186 aa).

The 182-residue stretch at 5–186 (LLTIKAAAKL…WEAQTQKRLR (182 aa)) folds into the YrdC-like domain.

The protein belongs to the SUA5 family. TsaC subfamily.

It localises to the cytoplasm. The catalysed reaction is L-threonine + hydrogencarbonate + ATP = L-threonylcarbamoyladenylate + diphosphate + H2O. Functionally, required for the formation of a threonylcarbamoyl group on adenosine at position 37 (t(6)A37) in tRNAs that read codons beginning with adenine. Catalyzes the conversion of L-threonine, HCO(3)(-)/CO(2) and ATP to give threonylcarbamoyl-AMP (TC-AMP) as the acyladenylate intermediate, with the release of diphosphate. This chain is Threonylcarbamoyl-AMP synthase, found in Hydrogenovibrio crunogenus (strain DSM 25203 / XCL-2) (Thiomicrospira crunogena).